The sequence spans 345 residues: D-alanine--D-alanine ligase (345 aa).

An ATP-grasp domain is found at lysine 133–glutamine 340. Proline 162–tyrosine 211 provides a ligand contact to ATP. Mg(2+) contacts are provided by aspartate 284, glutamate 296, and asparagine 298.

It belongs to the D-alanine--D-alanine ligase family. It depends on Mg(2+) as a cofactor. Requires Mn(2+) as cofactor.

The protein resides in the cytoplasm. The enzyme catalyses 2 D-alanine + ATP = D-alanyl-D-alanine + ADP + phosphate + H(+). Its pathway is cell wall biogenesis; peptidoglycan biosynthesis. Cell wall formation. This chain is D-alanine--D-alanine ligase, found in Wolinella succinogenes (strain ATCC 29543 / DSM 1740 / CCUG 13145 / JCM 31913 / LMG 7466 / NCTC 11488 / FDC 602W) (Vibrio succinogenes).